The sequence spans 151 residues: Ribosomal RNA large subunit methyltransferase H (151 aa).

S-adenosyl-L-methionine-binding positions include alanine 101 and 119–124; that span reads LSEMTF.

This sequence belongs to the RNA methyltransferase RlmH family. In terms of assembly, homodimer.

The protein localises to the cytoplasm. The catalysed reaction is pseudouridine(1915) in 23S rRNA + S-adenosyl-L-methionine = N(3)-methylpseudouridine(1915) in 23S rRNA + S-adenosyl-L-homocysteine + H(+). Specifically methylates the pseudouridine at position 1915 (m3Psi1915) in 23S rRNA. This is Ribosomal RNA large subunit methyltransferase H from Helicobacter pylori (strain G27).